A 210-amino-acid chain; its full sequence is Uridine kinase (210 aa).

12–19 lines the ATP pocket; it reads GGSGSGKT.

This sequence belongs to the uridine kinase family.

Its subcellular location is the cytoplasm. The enzyme catalyses uridine + ATP = UMP + ADP + H(+). The catalysed reaction is cytidine + ATP = CMP + ADP + H(+). Its pathway is pyrimidine metabolism; CTP biosynthesis via salvage pathway; CTP from cytidine: step 1/3. The protein operates within pyrimidine metabolism; UMP biosynthesis via salvage pathway; UMP from uridine: step 1/1. This chain is Uridine kinase, found in Bacillus pumilus (strain SAFR-032).